Reading from the N-terminus, the 338-residue chain is 3-phosphoshikimate 1-carboxyvinyltransferase 2 (338 aa).

R25 serves as a coordination point for phosphoenolpyruvate. The 3-phosphoshikimate site is built by S72, S73, Q74, S100, D225, and K252. Q74 is a binding site for phosphoenolpyruvate. The active-site Proton acceptor is D225. Phosphoenolpyruvate contacts are provided by R256, R298, and K323.

It belongs to the EPSP synthase family.

It localises to the plastid. Its subcellular location is the chloroplast. It carries out the reaction 3-phosphoshikimate + phosphoenolpyruvate = 5-O-(1-carboxyvinyl)-3-phosphoshikimate + phosphate. Its pathway is metabolic intermediate biosynthesis; chorismate biosynthesis; chorismate from D-erythrose 4-phosphate and phosphoenolpyruvate: step 6/7. Functionally, catalyzes the transfer of the enolpyruvyl moiety of phosphoenolpyruvate (PEP) to the 5-hydroxyl of shikimate-3-phosphate (S3P) to produce enolpyruvyl shikimate-3-phosphate and inorganic phosphate. This is 3-phosphoshikimate 1-carboxyvinyltransferase 2 (EPSPS-2) from Nicotiana tabacum (Common tobacco).